The chain runs to 349 residues: Dihydroorotate dehydrogenase (quinone) (349 aa).

Residues 67-71 (AGLDK) and threonine 91 contribute to the FMN site. Lysine 71 contributes to the substrate binding site. 116-120 (NRLGF) is a binding site for substrate. Positions 147 and 180 each coordinate FMN. Asparagine 180 lines the substrate pocket. Serine 183 functions as the Nucleophile in the catalytic mechanism. Residue asparagine 185 coordinates substrate. FMN-binding residues include lysine 225 and threonine 253. 254 to 255 (NT) contacts substrate. Residues glycine 276, glycine 305, and 326–327 (YT) each bind FMN.

It belongs to the dihydroorotate dehydrogenase family. Type 2 subfamily. As to quaternary structure, monomer. It depends on FMN as a cofactor.

It is found in the cell membrane. The enzyme catalyses (S)-dihydroorotate + a quinone = orotate + a quinol. It functions in the pathway pyrimidine metabolism; UMP biosynthesis via de novo pathway; orotate from (S)-dihydroorotate (quinone route): step 1/1. Functionally, catalyzes the conversion of dihydroorotate to orotate with quinone as electron acceptor. The protein is Dihydroorotate dehydrogenase (quinone) of Bordetella parapertussis (strain 12822 / ATCC BAA-587 / NCTC 13253).